Here is a 153-residue protein sequence, read N- to C-terminus: Ribosomal RNA large subunit methyltransferase H (153 aa).

Residues Leu-70, Gly-102, and 121–126 contribute to the S-adenosyl-L-methionine site; that span reads LSSMTF.

This sequence belongs to the RNA methyltransferase RlmH family. Homodimer.

The protein localises to the cytoplasm. The catalysed reaction is pseudouridine(1915) in 23S rRNA + S-adenosyl-L-methionine = N(3)-methylpseudouridine(1915) in 23S rRNA + S-adenosyl-L-homocysteine + H(+). In terms of biological role, specifically methylates the pseudouridine at position 1915 (m3Psi1915) in 23S rRNA. This Dictyoglomus thermophilum (strain ATCC 35947 / DSM 3960 / H-6-12) protein is Ribosomal RNA large subunit methyltransferase H.